A 180-amino-acid chain; its full sequence is Large ribosomal subunit protein uL5 (180 aa).

It belongs to the universal ribosomal protein uL5 family. As to quaternary structure, part of the 50S ribosomal subunit; part of the 5S rRNA/L5/L18/L25 subcomplex. Contacts the 5S rRNA and the P site tRNA. Forms a bridge to the 30S subunit in the 70S ribosome.

This is one of the proteins that bind and probably mediate the attachment of the 5S RNA into the large ribosomal subunit, where it forms part of the central protuberance. In the 70S ribosome it contacts protein S13 of the 30S subunit (bridge B1b), connecting the 2 subunits; this bridge is implicated in subunit movement. Contacts the P site tRNA; the 5S rRNA and some of its associated proteins might help stabilize positioning of ribosome-bound tRNAs. In Streptococcus equi subsp. equi (strain 4047), this protein is Large ribosomal subunit protein uL5.